The primary structure comprises 5088 residues: Replicase polyprotein 1ab (5088 aa).

Residues 26–46 (VTNVIQYWTPILTMLLLAIYI) form a helical membrane-spanning segment. Residues 301–323 (EIEDDTEAEETQKTKRKGKLQPQ) are disordered. The next 5 membrane-spanning stretches (helical) occupy residues 343–363 (HLTF…MSPT), 1132–1152 (GLFL…AITI), 1156–1176 (TMMM…HLLL), 1201–1221 (YGCL…LAYI), and 1250–1270 (ILIP…VSYV). Residues His-1434 and Cys-1539 each act as for 3C-like proteinase in the active site. A run of 2 helical transmembrane segments spans residues 1729–1749 (FTHT…LFFV) and 1758–1778 (ILSS…YGLV). Residues 3093–3112 (KPNCPMVPSEVPVRNKHKSA) form a disordered region. The region spanning 4351 to 4616 (MNIVMDDCIC…MTQCIYQSFV (266 aa)) is the ExoN domain. Residues Asp-4362, Glu-4364, and Asp-4481 contribute to the active site. Zn(2+)-binding residues include Cys-4498, Cys-4504, Cys-4522, and His-4525. Catalysis depends on residues His-4599, Asp-4604, Lys-4880, Asp-4969, Lys-4998, and Glu-5035. A Nidovirus-type SAM-dependent 2'-O-MTase domain is found at 4844–5088 (LNNHAALAKA…RQSVFRYSPK (245 aa)).

Homodimer. Post-translationally, specific enzymatic cleavages in vivo by its own protease yield mature proteins. 3CL-PRO is autocatalytically processed.

The protein resides in the membrane. The catalysed reaction is a 5'-end (5'-triphosphoguanosine)-ribonucleoside in mRNA + S-adenosyl-L-methionine = a 5'-end (N(7)-methyl 5'-triphosphoguanosine)-ribonucleoside in mRNA + S-adenosyl-L-homocysteine. It catalyses the reaction RNA(n) + a ribonucleoside 5'-triphosphate = RNA(n+1) + diphosphate. It carries out the reaction ATP + H2O = ADP + phosphate + H(+). The enzyme catalyses a 5'-end (N(7)-methyl 5'-triphosphoguanosine)-ribonucleoside in mRNA + S-adenosyl-L-methionine = a 5'-end (N(7)-methyl 5'-triphosphoguanosine)-(2'-O-methyl-ribonucleoside) in mRNA + S-adenosyl-L-homocysteine + H(+). Functionally, cysteine protease responsible for the majority of cleavages of the polyprotein. Recognizes substrates containing the core sequence [NT]-[EHKQSY]-|-[AGNST]. The helicase which contains a zinc finger structure displays RNA and DNA duplex-unwinding activities with 5' to 3' polarity. In terms of biological role, RNA-directed RNA polymerase that catalyzes the transcription of viral genomic and subgenomic RNAs. Its function is as follows. Catalyzes the RNA N7-guanylyltransferase reaction to methylate the core cap structure GpppN-RNA into the type-0 cap (m)GpppN-RNA. This Ochlerotatus harrisoni (CAVV) protein is Replicase polyprotein 1ab.